The chain runs to 252 residues: MILSAAVDNGQPGYPWLVFLHGFSGDRNEWRKVGDAFPAWPRLYLDLPGHGGSADIAVQDFAGVNTLLQSTLNSYNIHKYWLIGYSLGGRVAMNFASQPRAGMRGLIVEGGHPGLQDAEARQARRSNDSAWAERFRREPLEQVFADWYQQPVFASLNAAQRESLVALRSRNNGATLAAMLQATSLAAQADLRASLQARDFPFHYLCGERDAKFRAIAQTLAADLHLIHHAGHNAHRDNPAAVIACLAQILAS.

The protein belongs to the AB hydrolase superfamily. MenH family. Monomer.

It catalyses the reaction 5-enolpyruvoyl-6-hydroxy-2-succinyl-cyclohex-3-ene-1-carboxylate = (1R,6R)-6-hydroxy-2-succinyl-cyclohexa-2,4-diene-1-carboxylate + pyruvate. It functions in the pathway quinol/quinone metabolism; 1,4-dihydroxy-2-naphthoate biosynthesis; 1,4-dihydroxy-2-naphthoate from chorismate: step 3/7. Its pathway is quinol/quinone metabolism; menaquinone biosynthesis. In terms of biological role, catalyzes a proton abstraction reaction that results in 2,5-elimination of pyruvate from 2-succinyl-5-enolpyruvyl-6-hydroxy-3-cyclohexene-1-carboxylate (SEPHCHC) and the formation of 2-succinyl-6-hydroxy-2,4-cyclohexadiene-1-carboxylate (SHCHC). The protein is 2-succinyl-6-hydroxy-2,4-cyclohexadiene-1-carboxylate synthase of Klebsiella pneumoniae subsp. pneumoniae (strain ATCC 700721 / MGH 78578).